The chain runs to 386 residues: Patatin-T5 (386 aa).

The first 23 residues, 1–23 (MATTNSFTILIFMILATTSSTFA), serve as a signal peptide directing secretion. The region spanning 32 to 229 (LSIDGGGIKG…TVDDPALLSI (198 aa)) is the PNPLA domain. The short motif at 36–41 (GGGIKG) is the GXGXXG element. N-linked (GlcNAc...) asparagine glycosylation is present at Asn60. The GXSXG signature appears at 75–79 (GTSTG). The active-site Nucleophile is Ser77. 2 N-linked (GlcNAc...) asparagine glycosylation sites follow: Asn90 and Asn202. Asp215 serves as the catalytic Proton acceptor. Residues 215 to 217 (DGA) carry the DGA/G motif.

This sequence belongs to the patatin family. In terms of processing, N-glycosylated. In terms of tissue distribution, tuber and stolon.

It is found in the vacuole. Probable lipolytic acyl hydrolase (LAH), an activity which is thought to be involved in the response of tubers to pathogens. The protein is Patatin-T5 of Solanum tuberosum (Potato).